Consider the following 274-residue polypeptide: (R)-stereoselective amidase (274 aa).

Residues 1 to 234 (MKIELVQLAG…EVRHVVELDL (234 aa)) form the CN hydrolase domain. Glutamate 40 serves as the catalytic Proton acceptor. The active-site Proton donor is the lysine 108. The active-site Nucleophile is cysteine 140.

Monomer.

It carries out the reaction (R)-piperazine-2-carboxamide + H2O = (R)-piperazine-2-carboxylate + NH4(+). It catalyses the reaction beta-alaninamide + H2O = beta-alanine + NH4(+). Completely inhibited by p-chloromercuribenzoate, N-ethylmaleimide, MnSO(4), MnCl(2), CoCl(2), NiCl(2), CuSO(4), CuCl(2), ZnSO(4), ZnCl(2), AgNO(3), CdCl(2), HgCl(2) and PbCl(2). Partially inhibited by FeCl(3) and Fe(NH(4))(2)(SO(4))(2). Slightly enhanced by dithiothreitol. Unaffected by LiBr, H(2)BO(3), NaCl, MgSO(4), MgCl(2), AlCl(3), KCl, CaCl(2), CrCl(3), RbCl, Na(2)MoO(4), (NH(4))(6)Mo(7)O(24), CsCl and BaCl(2). Unaffected by the chelating agents o-phenanthroline, 8-hydroxyquinoline, enthylenediaminetetraacetic acid and alpha,alpha'-dipyridyl. Not inhibited by the carbonyl reagents hydroxylamine, phenylhydrazine, hydrazine, D,L-penicillamine and D-cycloserine. Not affected by the serine protease inhibitor phenylmethanesulfonyl fluoride, the serine/cysteine protease inhibitor leupeptine or the aspartic protease inhibitor pepstatin. Its function is as follows. Hydrolyzes (R)-piperazine-2-carboxamide and (R)-piperazine-2-tert-butylcarboxamide with strict R-stereoselectivity. Also active towards beta-alaninamide, piperidine-3-carboxmide, D-glutaminamide and slightly active towards L-glutaminamide and piperidine-4-carboxamide. This is (R)-stereoselective amidase from Pseudomonas sp.